Consider the following 262-residue polypeptide: Phosphonates import ATP-binding protein PhnC (262 aa).

The 249-residue stretch at 5–253 (IRVEKLAKTF…RFDHLYRSIN (249 aa)) folds into the ABC transporter domain. Position 37–44 (37–44 (GPSGSGKS)) interacts with ATP.

It belongs to the ABC transporter superfamily. Phosphonates importer (TC 3.A.1.9.1) family. As to quaternary structure, the complex is composed of two ATP-binding proteins (PhnC), two transmembrane proteins (PhnE) and a solute-binding protein (PhnD).

The protein resides in the cell inner membrane. It catalyses the reaction phosphonate(out) + ATP + H2O = phosphonate(in) + ADP + phosphate + H(+). Functionally, part of the ABC transporter complex PhnCDE involved in phosphonates import. Responsible for energy coupling to the transport system. The polypeptide is Phosphonates import ATP-binding protein PhnC (Shigella dysenteriae serotype 1 (strain Sd197)).